The chain runs to 557 residues: Polypyrimidine tract-binding protein 1 (557 aa).

N-acetylmethionine is present on Met-1. Position 16 is a phosphoserine (Ser-16). 3 RRM domains span residues 59-143 (RVIH…SSPN), 184-260 (LRII…FSKL), and 363-437 (SVLL…LSKH). Lys-65 is covalently cross-linked (Glycyl lysine isopeptide (Lys-Gly) (interchain with G-Cter in SUMO2)). At Tyr-127 the chain carries Phosphotyrosine. A Phosphothreonine modification is found at Thr-138. Position 141 is a phosphoserine (Ser-141). A Glycyl lysine isopeptide (Lys-Gly) (interchain with G-Cter in SUMO2) cross-link involves residue Lys-218. A Phosphoserine modification is found at Ser-459. The 76-residue stretch at 480–555 (ATLHLSNIPP…HHLRVSFSKS (76 aa)) folds into the RRM 4 domain.

Monomer. Part of a ternary complex containing KHSRP, PTBP1, PTBP2 and HNRPH1. Interacts with RAVER1 and SFPQ. Interacts with IVNS1ABP (via BACK domain); the interaction is direct.

It is found in the nucleus. Its function is as follows. Plays a role in pre-mRNA splicing and in the regulation of alternative splicing events. Activates exon skipping of its own pre-mRNA during muscle cell differentiation. Binds to the polypyrimidine tract of introns. May promote RNA looping when bound to two separate polypyrimidine tracts in the same pre-mRNA. May promote the binding of U2 snRNP to pre-mRNA. Cooperates with RAVER1 to modulate switching between mutually exclusive exons during maturation of the TPM1 pre-mRNA. Represses the splicing of MAPT/Tau exon 10. Binds to polypyrimidine-rich controlling element (PCE) of CFTR and promotes exon skipping of CFTR exon 9, thereby antagonizing TIA1 and its role in exon inclusion of CFTR exon 9. Plays a role in the splicing of pyruvate kinase PKM by binding repressively to a polypyrimidine tract flanking PKM exon 9, inhibiting exon 9 inclusion and resulting in exon 10 inclusion and production of the PKM M2 isoform. In case of infection by picornaviruses, binds to the viral internal ribosome entry site (IRES) and stimulates the IRES-mediated translation. The polypeptide is Polypyrimidine tract-binding protein 1 (PTBP1) (Homo sapiens (Human)).